Consider the following 498-residue polypeptide: Type II secretion system protein E (498 aa).

Residues Cys-394, Cys-397, Cys-425, and Cys-428 each coordinate Zn(2+).

Belongs to the GSP E family. In terms of assembly, forms homooligomers; most probably hexamers. Interacts with OutL/GspL. Requires Zn(2+) as cofactor.

The protein localises to the cell inner membrane. It catalyses the reaction ATP + H2O + cellular proteinSide 1 = ADP + phosphate + cellular proteinSide 2.. In terms of biological role, ATPase component of the type II secretion system required for the energy-dependent secretion of extracellular factors such as proteases and toxins from the periplasm. Acts as a molecular motor to provide the energy that is required for assembly of the pseudopilus and the extrusion of substrates generated in the cytoplasm. The polypeptide is Type II secretion system protein E (outE) (Dickeya dadantii (strain 3937) (Erwinia chrysanthemi (strain 3937))).